Reading from the N-terminus, the 74-residue chain is WAP four-disulfide core domain protein 18 (74 aa).

A signal peptide spans 1–24; sequence MKTATVFVLVALIFMTMTTAWALS. The region spanning 26–73 is the WAP domain; it reads PKEKPGACPKPPPRSFGTCDERCTGDGSCSGNMKCCSNGCGHACKPPV.

The protein localises to the secreted. In terms of biological role, could have proteinase inhibiting capacity. This is WAP four-disulfide core domain protein 18 (WFDC18) from Bos taurus (Bovine).